Here is a 1357-residue protein sequence, read N- to C-terminus: DNA-directed RNA polymerase subunit beta (1357 aa).

The protein belongs to the RNA polymerase beta chain family. The RNAP catalytic core consists of 2 alpha, 1 beta, 1 beta' and 1 omega subunit. When a sigma factor is associated with the core the holoenzyme is formed, which can initiate transcription.

It carries out the reaction RNA(n) + a ribonucleoside 5'-triphosphate = RNA(n+1) + diphosphate. Its function is as follows. DNA-dependent RNA polymerase catalyzes the transcription of DNA into RNA using the four ribonucleoside triphosphates as substrates. This chain is DNA-directed RNA polymerase subunit beta, found in Pseudomonas putida (strain GB-1).